The primary structure comprises 473 residues: FAD-dependent monooxygeanse terM (473 aa).

The first 22 residues, 1–22, serve as a signal peptide directing secretion; that stretch reads MSENFKVLIIGGSVAGLTLALC. FAD contacts are provided by E34, G48, R107, D303, and A316. A helical membrane pass occupies residues 441–461; sequence VLYLICGALLAWWASGLVWHF.

The protein belongs to the paxM FAD-dependent monooxygenase family. The cofactor is FAD.

The protein localises to the membrane. The protein operates within secondary metabolite biosynthesis. FAD-dependent monooxygeanse; part of the gene cluster that mediates the biosynthesis of terpendoles, indole-diterpene (IDT) mycotoxins including terpendole I, terpendole K, terpendole C, as well as the kinesin Eg5 inhibitor terpendole E. Terpendoles biosynthesis begins with the synthesis of geranylgeranyl diphosphate (GGPP) by a yet unidentified GGPP synthase. Condensation of indole-3-glycerol phosphate with GGPP by the prenyltransferase terC then forms 3-geranylgeranylindole (3-GGI), followed by epoxidation and cyclization of this intermediate (by the FAD-dependent monooxygeanse terM and the terpene cyclase terB) to form paspaline. The cytochrome monooxygenase terQ then hydroxylates paspalline at C-11 to yield terpendole E. The cytochrome monooxygenase terP converts terpendole E to 13-desoxyterpendole I, and terQ converts 13-desoxyterpendole I into terpendole I. TerF and terK are required for conversion of terpendole I to terpendole C which is further converted to terpendole K. This is FAD-dependent monooxygeanse terM from Tolypocladium album (Soil fungus).